The following is an 816-amino-acid chain: Molybdenum cofactor sulfurase (816 aa).

K273 bears the N6-(pyridoxal phosphate)lysine mark. C427 is an active-site residue. An MOSC domain is found at 647 to 812 (NSDSQSHSCI…IRVGEEIIPN (166 aa)).

The protein belongs to the class-V pyridoxal-phosphate-dependent aminotransferase family. MOCOS subfamily. It depends on pyridoxal 5'-phosphate as a cofactor. In terms of tissue distribution, ubiquitously expressed.

It catalyses the reaction Mo-molybdopterin + L-cysteine + AH2 = thio-Mo-molybdopterin + L-alanine + A + H2O. It participates in cofactor biosynthesis; molybdopterin biosynthesis. Functionally, sulfurates the molybdenum cofactor. Sulfation of molybdenum is essential for xanthine dehydrogenase (XDH) and aldehyde oxidase (ADO) enzymes in which molybdenum cofactor is liganded by 1 oxygen and 1 sulfur atom in active form. This Solanum lycopersicum (Tomato) protein is Molybdenum cofactor sulfurase (FLACCA).